The sequence spans 77 residues: Membrane-associated ATPase epsilon chain (77 aa).

The protein to E.hirae NtpH. Sul-ATPase is composed of six (or maybe five) subunits: alpha, beta, delta, gamma, C (proteolipid), and possibly epsilon.

It carries out the reaction ATP + H2O + 4 H(+)(in) = ADP + phosphate + 5 H(+)(out). The protein is Membrane-associated ATPase epsilon chain (atpE) of Sulfolobus acidocaldarius (strain ATCC 33909 / DSM 639 / JCM 8929 / NBRC 15157 / NCIMB 11770).